Reading from the N-terminus, the 405-residue chain is Secreted aspartic protease FUS4 (405 aa).

Residues 1–24 (MLAIATLHVALQVFGAFSLSHAAA) form the signal peptide. In terms of domain architecture, Peptidase A1 spans 49–400 (YLFNVTVGSP…NFEERSFGLA (352 aa)). Residues N52, N61, N107, and N123 are each glycosylated (N-linked (GlcNAc...) asparagine). An intrachain disulfide couples C318 to C356.

This sequence belongs to the peptidase A1 family.

The protein localises to the secreted. Its function is as follows. Secreted aspartic protease; part of the gene cluster that mediates the biosynthesis of the mycotoxin fusarin C. Within the cluster, FUS1, FUS2, FUS8 and FUS9 are sufficient for fusarin production. The other FUS cluster members are not essential for fusarin C biosynthesis. The protein is Secreted aspartic protease FUS4 of Gibberella fujikuroi (strain CBS 195.34 / IMI 58289 / NRRL A-6831) (Bakanae and foot rot disease fungus).